We begin with the raw amino-acid sequence, 132 residues long: Small ribosomal subunit protein uS8 (132 aa).

The protein belongs to the universal ribosomal protein uS8 family. As to quaternary structure, part of the 30S ribosomal subunit. Contacts proteins S5 and S12.

Its function is as follows. One of the primary rRNA binding proteins, it binds directly to 16S rRNA central domain where it helps coordinate assembly of the platform of the 30S subunit. This is Small ribosomal subunit protein uS8 from Syntrophomonas wolfei subsp. wolfei (strain DSM 2245B / Goettingen).